Here is a 499-residue protein sequence, read N- to C-terminus: Trichoplein keratin filament-binding protein (499 aa).

Coiled coils occupy residues 17–143 (LEQQ…LYEQ), 169–304 (EQIT…LSAL), and 405–485 (NRER…TQRG). The trichohyalin/plectin homology domain stretch occupies residues 260 to 426 (RKMEQCRKKT…RQFTSREKKQ (167 aa)).

The protein belongs to the TCHP family.

The protein resides in the cytoplasm. The protein localises to the cytoskeleton. It is found in the microtubule organizing center. Its subcellular location is the centrosome. In terms of biological role, may act as a 'capping' or 'branching' protein for keratin filaments in the cell periphery. May regulate K8/K18 filament and desmosome organization mainly at the apical or peripheral regions of simple epithelial cells. The polypeptide is Trichoplein keratin filament-binding protein (Xenopus laevis (African clawed frog)).